Consider the following 277-residue polypeptide: Small ribosomal subunit protein uS5 (277 aa).

A disordered region spans residues Ala18 to Ala40. Residues Pro29–Ala40 are compositionally biased toward basic and acidic residues. The 64-residue stretch at Leu87 to Val150 folds into the S5 DRBM domain.

Belongs to the universal ribosomal protein uS5 family. Component of the small ribosomal subunit.

It is found in the cytoplasm. Its subcellular location is the nucleus. The protein resides in the nucleolus. Functionally, component of the ribosome, a large ribonucleoprotein complex responsible for the synthesis of proteins in the cell. The small ribosomal subunit (SSU) binds messenger RNAs (mRNAs) and translates the encoded message by selecting cognate aminoacyl-transfer RNA (tRNA) molecules. The large subunit (LSU) contains the ribosomal catalytic site termed the peptidyl transferase center (PTC), which catalyzes the formation of peptide bonds, thereby polymerizing the amino acids delivered by tRNAs into a polypeptide chain. The nascent polypeptides leave the ribosome through a tunnel in the LSU and interact with protein factors that function in enzymatic processing, targeting, and the membrane insertion of nascent chains at the exit of the ribosomal tunnel. Plays a role in the assembly and function of the 40S ribosomal subunit. Mutations in this protein affects the control of translational fidelity. Involved in nucleolar processing of pre-18S ribosomal RNA and ribosome assembly. This Ictalurus punctatus (Channel catfish) protein is Small ribosomal subunit protein uS5 (rps2).